Consider the following 233-residue polypeptide: 3-dehydroquinate dehydratase (233 aa).

Residues 34-36 and R64 contribute to the 3-dehydroquinate site; that span reads ELR. H118 functions as the Proton donor/acceptor in the catalytic mechanism. Catalysis depends on K145, which acts as the Schiff-base intermediate with substrate. 3-dehydroquinate-binding residues include R185, S205, and Q209.

It belongs to the type-I 3-dehydroquinase family. Homodimer.

It catalyses the reaction 3-dehydroquinate = 3-dehydroshikimate + H2O. It participates in metabolic intermediate biosynthesis; chorismate biosynthesis; chorismate from D-erythrose 4-phosphate and phosphoenolpyruvate: step 3/7. Functionally, involved in the third step of the chorismate pathway, which leads to the biosynthesis of aromatic amino acids. Catalyzes the cis-dehydration of 3-dehydroquinate (DHQ) and introduces the first double bond of the aromatic ring to yield 3-dehydroshikimate. The protein is 3-dehydroquinate dehydratase of Coxiella burnetii (strain CbuG_Q212) (Coxiella burnetii (strain Q212)).